The sequence spans 402 residues: Multidrug resistance protein MdtH (402 aa).

Residues 1 to 12 (MSRVSQARNLGK) are Cytoplasmic-facing. Residues 13–33 (YFLLIDNMLVVLVFFVVFPLI) form a helical membrane-spanning segment. Over 34–98 (SIRFVDQMGW…GFATMGIAHE (65 aa)) the chain is Periplasmic. The helical transmembrane segment at 99-116 (PWLLWFSCFLSGLGGTLF) threads the bilayer. Over 117–138 (DPPRSALVVKLIRPEQRGRFFS) the chain is Cytoplasmic. Residues 139–159 (LLMMQDSAGAVIGALLGSWLL) traverse the membrane as a helical segment. Residues 160-164 (QYDFR) are Periplasmic-facing. Residues 165–185 (LVCATGAILFILCALFNAWLL) traverse the membrane as a helical segment. The Cytoplasmic segment spans residues 186 to 213 (PAWKLSTVRTPVREGMRRVMSDKRFVTY). Residues 214 to 234 (VLTLAGYYMLAVQVMLMLPIM) traverse the membrane as a helical segment. Over 235–243 (VNDIAGSPA) the chain is Periplasmic. A helical membrane pass occupies residues 244-264 (AVKWMYAIEACLSLTLLYPIA). At 265-276 (RWSEKRFRLEHR) the chain is on the cytoplasmic side. Residues 277–297 (LMAGLLVMSLSMIPIGMVGNL) form a helical membrane-spanning segment. At 298–299 (QQ) the chain is on the periplasmic side. The helical transmembrane segment at 300–320 (LFTLICAFYIGSVIAEPARET) threads the bilayer. Topologically, residues 321–339 (LSASLADARARGSYMGFSR) are cytoplasmic. The chain crosses the membrane as a helical span at residues 340–360 (LGLAIGGAIGYIGGGWLFDMG). Residues 361-367 (KALTQPE) are Periplasmic-facing. Residues 368-388 (LPWMMLGIIGFITFLALGWQF) traverse the membrane as a helical segment. Residues 389-402 (SHKRTPRRMLEPGA) lie on the Cytoplasmic side of the membrane.

Belongs to the major facilitator superfamily. DHA1 family. MdtH (TC 2.A.1.2.21) subfamily.

The protein localises to the cell inner membrane. This Salmonella choleraesuis (strain SC-B67) protein is Multidrug resistance protein MdtH.